A 450-amino-acid chain; its full sequence is Phosphoglucosamine mutase (450 aa).

The Phosphoserine intermediate role is filled by Ser102. Residues Ser102, Asp243, Asp245, and Asp247 each coordinate Mg(2+). Phosphoserine is present on Ser102.

The protein belongs to the phosphohexose mutase family. Requires Mg(2+) as cofactor. Activated by phosphorylation.

The catalysed reaction is alpha-D-glucosamine 1-phosphate = D-glucosamine 6-phosphate. Catalyzes the conversion of glucosamine-6-phosphate to glucosamine-1-phosphate. In Rhizobium meliloti (strain 1021) (Ensifer meliloti), this protein is Phosphoglucosamine mutase.